Here is a 206-residue protein sequence, read N- to C-terminus: Photosynthetic reaction center cytochrome c-551 (206 aa).

3 helical membrane passes run 10–30, 49–69, and 76–96; these read IALA…VSFL, FMGW…LGKM, and KWFL…FFSL. Heme is bound by residues Cys-152, Cys-155, His-156, and Met-182.

As to quaternary structure, component of the photosynthetic reaction center. The reaction center interacts with the Fenna-Matthews-Olson (FMO, fmoA) complex. In terms of processing, binds 1 heme group per subunit.

It localises to the cell inner membrane. Monoheme cytochrome which is the immediate electron donor to P840 of the photosynthetic reaction center complex. In Chlorobaculum parvum (strain DSM 263 / NCIMB 8327) (Chlorobium vibrioforme subsp. thiosulfatophilum), this protein is Photosynthetic reaction center cytochrome c-551 (pscC).